A 940-amino-acid polypeptide reads, in one-letter code: Chromatin assembly factor 1 subunit FSM (940 aa).

Disordered stretches follow at residues 317–473, 638–682, and 919–940; these read NVDD…DPCT, VDSD…FFVP, and KTTQNVNGDTDIPRINLLPSSQ. Positions 320 to 329 are enriched in polar residues; that stretch reads DSQLQKNTST. Residues 329–439 are a coiled coil; it reads TNEKDTQKAQ…LKKQLAIQKQ (111 aa). Residues 330–429 are compositionally biased toward basic and acidic residues; the sequence is NEKDTQKAQK…QKRREKEAVQ (100 aa). The segment covering 430–440 has biased composition (low complexity); that stretch reads LKKQLAIQKQA. A compositionally biased stretch (basic and acidic residues) spans 445–461; that stretch reads RFFKNKKDSEKLEKPGG. Residues 638–650 are compositionally biased toward acidic residues; it reads VDSDDEWEEEDPG.

It belongs to the CHAF1A family. In terms of assembly, component of the chromatin assembly factor 1 (CAF-1) complex, composed of FSM (FAS1), FAS2 and MSI1. In embryo, expressed in leaf primordia, coleoptile and radicle. In seedlings, expressed in cell division zone of roots, SAM and leaf primordia. Expressed in floral organ primordia.

The protein localises to the nucleus. Component of the chromatin assembly factor complex (CAF-1) involved in chromatin assembly following DNA replication and DNA repair. Required for several aspects of development, including apical meristem maintenance by regulating the durations of the S- and G2-phases of the cell cycle through its chromatin assembly activity. The chain is Chromatin assembly factor 1 subunit FSM (FSM) from Oryza sativa subsp. japonica (Rice).